A 135-amino-acid chain; its full sequence is MLSPKRTRFRKQHRGRMKGISYRGNHICFGRYALQALEPAWITSRQIEAGRKSMARYARRGGKIWIRIFPDKPVTVRPTETRMGSGKGSPEYWVSVVKPGRILYEMGGVSEIAAREAISIAASKMPIRTQFVIAG.

This sequence belongs to the universal ribosomal protein uL16 family. In terms of assembly, part of the 50S ribosomal subunit.

It is found in the plastid. Its subcellular location is the chloroplast. In Nandina domestica (Heavenly bamboo), this protein is Large ribosomal subunit protein uL16c.